A 248-amino-acid polypeptide reads, in one-letter code: Deoxyribose-phosphate aldolase (248 aa).

The active-site Proton donor/acceptor is the Asp-117. Lys-179 acts as the Schiff-base intermediate with acetaldehyde in catalysis. Lys-208 (proton donor/acceptor) is an active-site residue.

This sequence belongs to the DeoC/FbaB aldolase family. DeoC type 1 subfamily.

The protein resides in the cytoplasm. It catalyses the reaction 2-deoxy-D-ribose 5-phosphate = D-glyceraldehyde 3-phosphate + acetaldehyde. It functions in the pathway carbohydrate degradation; 2-deoxy-D-ribose 1-phosphate degradation; D-glyceraldehyde 3-phosphate and acetaldehyde from 2-deoxy-alpha-D-ribose 1-phosphate: step 2/2. In terms of biological role, catalyzes a reversible aldol reaction between acetaldehyde and D-glyceraldehyde 3-phosphate to generate 2-deoxy-D-ribose 5-phosphate. This chain is Deoxyribose-phosphate aldolase, found in Thermotoga petrophila (strain ATCC BAA-488 / DSM 13995 / JCM 10881 / RKU-1).